The primary structure comprises 112 residues: Replication initiation control protein YabA (112 aa).

Positions 85, 87, 101, and 104 each coordinate Zn(2+).

This sequence belongs to the YabA family. Homotetramer. Interacts with both DnaA and DnaN, acting as a bridge between these two proteins. It depends on Zn(2+) as a cofactor.

It is found in the cytoplasm. The protein resides in the nucleoid. Its function is as follows. Involved in control of chromosome replication initiation. Inhibits the cooperative binding of DnaA to the oriC region, thus negatively regulating initiation of chromosome replication. Inhibits the ability of DnaA-ATP to form a helix on DNA; does not disassemble preformed DnaA-DNA helices. Decreases the residence time of DnaA on the chromosome at its binding sites (oriC, replication forks and promoter-binding sites). Tethers DnaA to the replication machinery via the DNA polymerase beta sliding clamp subunit (dnaN). Associates with oriC and other DnaA targets on the chromosome in a DnaA-dependent manner. This Lacticaseibacillus casei (strain BL23) (Lactobacillus casei) protein is Replication initiation control protein YabA.